The following is a 95-amino-acid chain: Small ribosomal subunit protein uS15 (95 aa).

Belongs to the universal ribosomal protein uS15 family. As to quaternary structure, part of the 30S ribosomal subunit. Forms a bridge to the 50S subunit in the 70S ribosome, contacting the 23S rRNA.

In terms of biological role, one of the primary rRNA binding proteins, it binds directly to 16S rRNA where it helps nucleate assembly of the platform of the 30S subunit by binding and bridging several RNA helices of the 16S rRNA. Its function is as follows. Forms an intersubunit bridge (bridge B4) with the 23S rRNA of the 50S subunit in the ribosome. In Streptomyces avermitilis (strain ATCC 31267 / DSM 46492 / JCM 5070 / NBRC 14893 / NCIMB 12804 / NRRL 8165 / MA-4680), this protein is Small ribosomal subunit protein uS15.